The sequence spans 1389 residues: uncharacterized protein (1389 aa).

Residues 43–94 (STIAQRVSQLENEVAEINVALAEHVNELNSQEKRIDKLEKTVKKKKSNCSDD) are a coiled coil. The disordered stretch occupies residues 294 to 353 (HKNRRSKSDNSDLSEYSSSNSDDSECTDSDGSSCSTDGSPDCTESENTESHRSHGKKKHR). Low complexity-rich tracts occupy residues 304 to 314 (SDLSEYSSSNS) and 322 to 335 (SDGS…SPDC). WD repeat units lie at residues 867-907 (TFTD…VKHI), 1017-1056 (GYNE…TPSG), and 1115-1156 (GISN…ILST).

It localises to the virion. This is an uncharacterized protein from Acanthamoeba polyphaga (Amoeba).